We begin with the raw amino-acid sequence, 396 residues long: Succinyl-CoA:mesaconate CoA-transferase (396 aa).

The Nucleophile role is filled by Asp175.

It belongs to the CoA-transferase III family.

The enzyme catalyses mesaconate + succinyl-CoA = 2-methylfumaryl-CoA + succinate. Functionally, involved in the methylaspartate cycle. Catalyzes the transfer of the CoA moiety from succinyl-CoA to mesaconate to generate mesaconyl-CoA (2-methylfumaryl-CoA) and succinate. In Haloarcula marismortui (strain ATCC 43049 / DSM 3752 / JCM 8966 / VKM B-1809) (Halobacterium marismortui), this protein is Succinyl-CoA:mesaconate CoA-transferase.